Here is a 560-residue protein sequence, read N- to C-terminus: Flagellar M-ring protein (560 aa).

The chain crosses the membrane as a helical span at residues 26 to 46; it reads IPLIVAGSAAVAIVVAMVLWA. The interval 304–372 is disordered; sequence VGAGYPGGVP…TSNYEVDRTI (69 aa). Positions 331–353 are enriched in low complexity; that stretch reads PPTNQQNAQNTPQTSTSTNSNSA. A compositionally biased stretch (polar residues) spans 354–366; that stretch reads GPRSTQRNETSNY. Residues 455–475 form a helical membrane-spanning segment; that stretch reads FIDQLLAAGRWLLVLVVAWIL.

This sequence belongs to the FliF family. As to quaternary structure, the basal body constitutes a major portion of the flagellar organelle and consists of four rings (L,P,S, and M) mounted on a central rod. The M ring is integral to the inner membrane of the cell and may be connected to the flagellar rod via the S ring. The S (supramembrane ring) lies just distal to the M ring. The L and P rings lie in the outer membrane and the periplasmic space, respectively.

Its subcellular location is the cell inner membrane. It is found in the bacterial flagellum basal body. Functionally, the M ring may be actively involved in energy transduction. The protein is Flagellar M-ring protein (fliF) of Salmonella typhimurium (strain LT2 / SGSC1412 / ATCC 700720).